Consider the following 650-residue polypeptide: Zinc finger CCCH domain-containing protein 55 (650 aa).

The interval Asn67–Gly162 is disordered. Positions Ser105–Asn128 are enriched in low complexity. Over residues Pro141 to His154 the composition is skewed to polar residues. Residues Pro232–Tyr254 form a C3H1-type zinc finger. Positions Arg357 to Lys433 constitute an RRM domain. A disordered region spans residues Pro566 to Gln650. Residues Ala581 to Leu590 are compositionally biased toward basic and acidic residues.

The protein is Zinc finger CCCH domain-containing protein 55 of Arabidopsis thaliana (Mouse-ear cress).